The sequence spans 242 residues: Myogenic factor 6 (242 aa).

The disordered stretch occupies residues 31–63 (SPLYPGSDGTLSPCQDQMPPEAGSDSSGEEHVL). Positions 93 to 144 (DRRKAATLRERRRLKKINEAFEALKRRTVANPNQRLPKVEILRSAISYIERL) constitute a bHLH domain.

As to quaternary structure, efficient DNA binding requires dimerization with another bHLH protein. Interacts with CSRP3. As to expression, skeletal muscle.

The protein resides in the nucleus. Its function is as follows. Involved in muscle differentiation (myogenic factor). Induces fibroblasts to differentiate into myoblasts. Probable sequence specific DNA-binding protein. The sequence is that of Myogenic factor 6 (MYF6) from Homo sapiens (Human).